A 253-amino-acid chain; its full sequence is Allene oxide cyclase 2, chloroplastic (253 aa).

Residues 1-77 (MASSAVSLQS…SQNGNIENPR (77 aa)) constitute a chloroplast transit peptide.

The protein belongs to the allene oxide cyclase family. In terms of tissue distribution, highly expressed in fully developed leaves.

Its subcellular location is the plastid. The protein localises to the chloroplast. The catalysed reaction is (9Z,13S,15Z)-12,13-epoxyoctadeca-9,11,15-trienoate = (9S,13S,15Z)-12-oxophyto-10,15-dienoate. Involved in the production of 12-oxo-phytodienoic acid (OPDA), a precursor of jasmonic acid. This is Allene oxide cyclase 2, chloroplastic (AOC2) from Arabidopsis thaliana (Mouse-ear cress).